Consider the following 378-residue polypeptide: Deoxyhypusine synthase (378 aa).

Residues 107–111, 133–135, E139, and D253 each bind NAD(+); these read SNLIS and SAG. 138–139 is a spermidine binding site; it reads EE. Spermidine is bound at residue D258. Residue G300 participates in NAD(+) binding. H305 is a binding site for spermidine. Position 325 to 326 (325 to 326) interacts with NAD(+); it reads TG. Residues 331 to 333 and 340 to 346 each bind spermidine; these read GSD and EAISWGK. K346 functions as the Nucleophile in the catalytic mechanism. Residue 359-360 coordinates NAD(+); sequence DA.

The protein belongs to the deoxyhypusine synthase family. It depends on NAD(+) as a cofactor.

It catalyses the reaction [eIF5A protein]-L-lysine + spermidine = [eIF5A protein]-deoxyhypusine + propane-1,3-diamine. Its pathway is protein modification; eIF5A hypusination. Functionally, catalyzes the NAD-dependent oxidative cleavage of spermidine and the subsequent transfer of the butylamine moiety of spermidine to the epsilon-amino group of a specific lysine residue of the eIF-5A precursor protein to form the intermediate deoxyhypusine residue. The chain is Deoxyhypusine synthase (DYS1) from Debaryomyces hansenii (strain ATCC 36239 / CBS 767 / BCRC 21394 / JCM 1990 / NBRC 0083 / IGC 2968) (Yeast).